The sequence spans 613 residues: SNW/SKI-interacting protein (613 aa).

Positions 135–170 (EGDLGTVVDEEEELQKEIQETAEETKAAIEKIVNVR) form a coiled coil. An SNW region spans residues 186–350 (SQYIKYKPSQ…KARSERTGAA (165 aa)). Disordered regions lie at residues 219 to 252 (LDPP…TVKD), 315 to 437 (MRSK…RDRD), and 513 to 613 (DEQL…SDRR). Phosphoserine occurs at positions 235 and 243. The segment covering 236–247 (PPVPVMHSPPRP) has biased composition (pro residues). Composition is skewed to basic and acidic residues over residues 315 to 335 (MRSK…EQEL), 358 to 437 (DRGR…RDRD), 515 to 529 (QLDK…KPDK), 538 to 548 (VGSKRDRPVEF), and 562 to 574 (WVSD…KPLD). 2 coiled-coil regions span residues 318-349 (KVQK…RTGA) and 391-421 (REER…DAKD). Positions 577-590 (GSGGTMRASGGGGS) are enriched in gly residues. A compositionally biased stretch (basic and acidic residues) spans 592–613 (SRDDDHGGSGRTKINFERSDRR).

This sequence belongs to the SNW family. Component of the spliceosome. Interacts with SR45. As to expression, expressed in roots, stems, seedlings, siliques, cotyledons, leaves, inflorescences, seeds and shoot apical meristem.

The protein localises to the nucleus speckle. Functionally, splicing factor involved in post-transcriptional regulation of circadian clock and flowering time genes. Associates with the pre-mRNA of PRR7, PRR9, ELF3 and GI, and is necessary for the regulation of their alternative splicing and mRNA maturation. Probably involved in splice site recognition. The sequence is that of SNW/SKI-interacting protein (SKIP) from Arabidopsis thaliana (Mouse-ear cress).